The primary structure comprises 369 residues: Anhydro-N-acetylmuramic acid kinase (369 aa).

ATP is bound at residue 12-19; that stretch reads GTSLDGVD.

The protein belongs to the anhydro-N-acetylmuramic acid kinase family.

The enzyme catalyses 1,6-anhydro-N-acetyl-beta-muramate + ATP + H2O = N-acetyl-D-muramate 6-phosphate + ADP + H(+). It functions in the pathway amino-sugar metabolism; 1,6-anhydro-N-acetylmuramate degradation. It participates in cell wall biogenesis; peptidoglycan recycling. Its function is as follows. Catalyzes the specific phosphorylation of 1,6-anhydro-N-acetylmuramic acid (anhMurNAc) with the simultaneous cleavage of the 1,6-anhydro ring, generating MurNAc-6-P. Is required for the utilization of anhMurNAc either imported from the medium or derived from its own cell wall murein, and thus plays a role in cell wall recycling. The protein is Anhydro-N-acetylmuramic acid kinase of Shigella boydii serotype 4 (strain Sb227).